Reading from the N-terminus, the 183-residue chain is Putative ribosomal N-acetyltransferase YdaF (183 aa).

Positions 10–176 (ITIRLLEPKD…HDLVYYSLLK (167 aa)) constitute an N-acetyltransferase domain.

It belongs to the acetyltransferase family. Homohexamer, and homodimer.

Functionally, putative N-acetyltransferase. May act on ribosomal proteins (Potential). The chain is Putative ribosomal N-acetyltransferase YdaF (ydaF) from Bacillus subtilis (strain 168).